Consider the following 234-residue polypeptide: Carboxy-S-adenosyl-L-methionine synthase (234 aa).

Residues Tyr-35, 60–62 (GCS), 83–84 (DN), and Arg-191 each bind S-adenosyl-L-methionine.

This sequence belongs to the class I-like SAM-binding methyltransferase superfamily. Cx-SAM synthase family. Homodimer.

The catalysed reaction is prephenate + S-adenosyl-L-methionine = carboxy-S-adenosyl-L-methionine + 3-phenylpyruvate + H2O. Catalyzes the conversion of S-adenosyl-L-methionine (SAM) to carboxy-S-adenosyl-L-methionine (Cx-SAM). This Campylobacter lari (strain RM2100 / D67 / ATCC BAA-1060) protein is Carboxy-S-adenosyl-L-methionine synthase.